An 81-amino-acid chain; its full sequence is Putative membrane protein insertion efficiency factor (81 aa).

The disordered stretch occupies residues 61 to 81 (NDGGFDPVPPAPSSRTSSIAE).

The protein belongs to the UPF0161 family.

It localises to the cell inner membrane. Could be involved in insertion of integral membrane proteins into the membrane. The polypeptide is Putative membrane protein insertion efficiency factor (Pseudomonas putida (strain ATCC 700007 / DSM 6899 / JCM 31910 / BCRC 17059 / LMG 24140 / F1)).